The chain runs to 377 residues: Chaperone protein DnaJ (377 aa).

The J domain maps to 5-70 (DYYQILGIPK…EKRSAYDQYG (66 aa)). The CR-type zinc-finger motif lies at 132 to 210 (GIKKEIQIPT…CHGQGRVETY (79 aa)). Zn(2+) contacts are provided by cysteine 145, cysteine 148, cysteine 162, cysteine 165, cysteine 184, cysteine 187, cysteine 198, and cysteine 201. 4 CXXCXGXG motif repeats span residues 145-152 (CKTCYGSG), 162-169 (CSTCHGKG), 184-191 (CPTCHGKG), and 198-205 (CNLCHGQG).

It belongs to the DnaJ family. Homodimer. It depends on Zn(2+) as a cofactor.

It localises to the cytoplasm. Its function is as follows. Participates actively in the response to hyperosmotic and heat shock by preventing the aggregation of stress-denatured proteins and by disaggregating proteins, also in an autonomous, DnaK-independent fashion. Unfolded proteins bind initially to DnaJ; upon interaction with the DnaJ-bound protein, DnaK hydrolyzes its bound ATP, resulting in the formation of a stable complex. GrpE releases ADP from DnaK; ATP binding to DnaK triggers the release of the substrate protein, thus completing the reaction cycle. Several rounds of ATP-dependent interactions between DnaJ, DnaK and GrpE are required for fully efficient folding. Also involved, together with DnaK and GrpE, in the DNA replication of plasmids through activation of initiation proteins. The polypeptide is Chaperone protein DnaJ (Buchnera aphidicola subsp. Acyrthosiphon pisum (strain 5A)).